A 105-amino-acid chain; its full sequence is Heme oxygenase (mycobilin-producing) (105 aa).

One can recognise an ABM domain in the interval 3–92 (VVKINAIEVP…VATGASLLEF (90 aa)). Heme-binding positions include 22-26 (RFAHR), His-75, and 83-86 (VATG).

It belongs to the antibiotic biosynthesis monooxygenase family. In terms of assembly, homodimer.

The catalysed reaction is heme b + 3 AH2 + 3 O2 + 2 H(+) = mycobilin a + Fe(2+) + 3 A + 3 H2O. It carries out the reaction heme b + 3 AH2 + 3 O2 + 2 H(+) = mycobilin b + Fe(2+) + 3 A + 3 H2O. Catalyzes the oxidative degradation of the heme macrocyclic porphyrin ring in the presence of a suitable electron donor such as ascorbate or NADPH--cytochrome P450 reductase, with subsequent release of free iron. The polypeptide is Heme oxygenase (mycobilin-producing) (mhuD) (Mycobacterium tuberculosis (strain CDC 1551 / Oshkosh)).